The following is a 208-amino-acid chain: MKIIIMLIIAYLIGAIPSGVIIGKFFFHTDIRQAGSGNIGTTNTYRVLGPTAGTIVMVMDILKGTIAALQPTLLFHMNNRYTLLIGLAAILGHTFSIYIGFKGGKAVATSAGILLAYNWEFFLIASAIMLLLVYTTSMVSVASMTAFPIVTLIAIFYYQDWLLSLVAFALTLFIFYRHRSNIARIKNGTESLVHFGLGWRRQQRANRK.

5 helical membrane-spanning segments follow: residues 3–23, 55–75, 81–101, 113–133, and 155–175; these read IIIMLIIAYLIGAIPSGVIIG, IVMVMDILKGTIAALQPTLLF, YTLLIGLAAILGHTFSIYIGF, ILLAYNWEFFLIASAIMLLLV, and IFYYQDWLLSLVAFALTLFIF.

This sequence belongs to the PlsY family. As to quaternary structure, probably interacts with PlsX.

The protein localises to the cell membrane. The enzyme catalyses an acyl phosphate + sn-glycerol 3-phosphate = a 1-acyl-sn-glycero-3-phosphate + phosphate. Its pathway is lipid metabolism; phospholipid metabolism. Catalyzes the transfer of an acyl group from acyl-phosphate (acyl-PO(4)) to glycerol-3-phosphate (G3P) to form lysophosphatidic acid (LPA). This enzyme utilizes acyl-phosphate as fatty acyl donor, but not acyl-CoA or acyl-ACP. In Lactiplantibacillus plantarum (strain ATCC BAA-793 / NCIMB 8826 / WCFS1) (Lactobacillus plantarum), this protein is Glycerol-3-phosphate acyltransferase.